We begin with the raw amino-acid sequence, 1031 residues long: Toll-like receptor 9 (1031 aa).

Positions 1–25 are cleaved as a signal peptide; that stretch reads MGPCHGALHPLSLLVQAAALAVALA. Topologically, residues 26–817 are extracellular; that stretch reads QGTLPAFLPC…LCLDEALSWD (792 aa). An intrachain disulfide couples Cys-35 to Cys-45. 47 to 51 is a DNA binding site; that stretch reads WLFLK. 26 LRR repeats span residues 62–85, 87–110, 122–147, 150–166, 167–190, 198–221, 223–242, 243–268, 283–306, 308–332, 333–356, 363–386, 390–413, 415–440, 470–494, 496–519, 520–543, 545–572, 574–598, 600–622, 627–650, 652–675, 676–699, 701–723, 724–747, and 749–772; these read RGNVTSLSLYSNRIHHLHDSDFVH, SSLRRLNLKWNCPPASLSPMHFPC, VPTLEELNLSYNSITTVPALPSSLVS, LSRTNILVLDPANLAGL, HSLRFLFLDGNCYYKNPCPQALQV, LGNLTHLSLKYNNLTAVPRGLPPS, EYLLLSYNHIITLAPEDLAN, LTALRVLDVGGNCRRCDHARNPCMEC, LNHLEGLVLKDSSLYNLNPRWFHA, GNLMVLDLSENFLYDCITKTTAFQG, LAQLRRLNLSFNYHKKVSFAHLHL, LLSLQQLDMHGIFFRSLSETTLRS, LPMLQSLHLQMNFINQAQLSIFGA, PGLRYVDLSDNRISGAMELAAATGEV, CKTLNFTLDLSRNNLVTIQPEMFAR, SRLQCLLLSRNSISQAVNGSQFMP, LTSLQVLDLSHNKLDLYHGRSFTE, PRLEALDLSYNSQPFSMQGVGHNLSFVA, LPALRYLSLAHNDIHSRVSQQLCSA, LRALDFSGNALSRMWAEGDLYLH, LRSLVRLDLSQNRLHTLLPRTLDN, PKSLRLLRLRDNYLAFFNWSSLVL, LPRLEALDLAGNQLKALSNGSLPN, TQLQRLDLSSNSISFVASSFFAL, ATRLRELNLSANALKTVEPSWFGS, and AGTLKVLDVTGNPLHCACGAAFVD. Asn-64 is a glycosylation site (N-linked (GlcNAc...) asparagine). DNA-binding positions include 72–77 and 95–109; these read SNRIHH and KWNCPPASLSPMHFP. An intrachain disulfide couples Cys-98 to Cys-110. Asn-129 carries an N-linked (GlcNAc...) asparagine glycan. DNA-binding positions include Tyr-132, Arg-152, and 179-181; that span reads YYK. A disulfide bond links Cys-178 and Cys-184. Asn-200 is a glycosylation site (N-linked (GlcNAc...) asparagine). Tyr-208 lines the DNA pocket. Residues Asn-210 and Asn-242 are each glycosylated (N-linked (GlcNAc...) asparagine). 2 disulfides stabilise this stretch: Cys-255–Cys-268 and Cys-258–Cys-265. The S-palmitoyl cysteine moiety is linked to residue Cys-258. DNA is bound at residue Arg-262. Cys-265 is lipidated: S-palmitoyl cysteine. The N-linked (GlcNAc...) asparagine glycan is linked to Asn-340. An intrachain disulfide couples Cys-470 to Cys-500. 2 N-linked (GlcNAc...) asparagine glycosylation sites follow: Asn-474 and Asn-513. Asn-567 is a glycosylation site (N-linked (GlcNAc...) asparagine). 3 N-linked (GlcNAc...) asparagine glycosylation sites follow: Asn-669, Asn-694, and Asn-699. Asn-731 carries N-linked (GlcNAc...) asparagine glycosylation. Cystine bridges form between Cys-764/Cys-790 and Cys-766/Cys-809. Residues 818–838 form a helical membrane-spanning segment; it reads CFGLSLLTVALGLAVPMLHHL. The Cytoplasmic portion of the chain corresponds to 839 to 1031; sequence CGWDLWYCFH…NFCRGPTTAE (193 aa). In terms of domain architecture, TIR spans 866 to 1011; that stretch reads LPYDAFVVFD…SFWAQLGTAL (146 aa).

Belongs to the Toll-like receptor family. In terms of assembly, monomer and homodimer. Exists as a monomer in the absence of unmethylated cytidine-phosphate-guanosine (CpG) ligand. Proteolytic processing of an insertion loop (Z-loop) is required for homodimerization upon binding to the unmethylated CpG ligand leading to its activation. Interacts with MYD88 via their respective TIR domains. Interacts with BTK. Interacts (via transmembrane domain) with UNC93B1. Interacts with CD300LH; the interaction may promote full activation of TLR9-triggered innate responses. Interacts with CNPY3 and HSP90B1; this interaction is required for proper folding in the endoplasmic reticulum. Interacts with SMPDL3B. Interacts with CD82; this interaction is essential for TLR9-dependent myddosome formation in response to CpG stimulation. Post-translationally, activated by proteolytic cleavage of the flexible loop between repeats LRR14 and LRR15 within the ectodomain. Cleavage requires UNC93B1. Proteolytically processed by first removing the majority of the ectodomain by either asparagine endopeptidase (AEP) or a cathepsin followed by a trimming event that is solely cathepsin mediated and required for optimal receptor signaling. In terms of processing, palmitoylated by ZDHHC3 in the Golgi regulates TLR9 trafficking from the Golgi to endosomes. Depalmitoylation by PPT1 controls the release of TLR9 from UNC93B1 in endosomes.

It is found in the endoplasmic reticulum membrane. Its subcellular location is the endosome. It localises to the lysosome. The protein localises to the cytoplasmic vesicle. The protein resides in the phagosome. Its function is as follows. Key component of innate and adaptive immunity. TLRs (Toll-like receptors) control host immune response against pathogens through recognition of molecular patterns specific to microorganisms. TLR9 is a nucleotide-sensing TLR which is activated by unmethylated cytidine-phosphate-guanosine (CpG) dinucleotides. Acts via MYD88 and TRAF6, leading to NF-kappa-B activation, cytokine secretion and the inflammatory response. Upon CpG stimulation, induces B-cell proliferation, activation, survival and antibody production. This is Toll-like receptor 9 (TLR9) from Felis catus (Cat).